We begin with the raw amino-acid sequence, 209 residues long: Uridine kinase (209 aa).

Position 12-19 (12-19 (GGSGSGKT)) interacts with ATP.

Belongs to the uridine kinase family.

The protein resides in the cytoplasm. The enzyme catalyses uridine + ATP = UMP + ADP + H(+). It carries out the reaction cytidine + ATP = CMP + ADP + H(+). It participates in pyrimidine metabolism; CTP biosynthesis via salvage pathway; CTP from cytidine: step 1/3. Its pathway is pyrimidine metabolism; UMP biosynthesis via salvage pathway; UMP from uridine: step 1/1. The polypeptide is Uridine kinase (Streptococcus mutans serotype c (strain ATCC 700610 / UA159)).